A 177-amino-acid polypeptide reads, in one-letter code: Ribulose bisphosphate carboxylase small subunit, chloroplastic 3 (177 aa).

A chloroplast-targeting transit peptide spans 1-56; it reads MASSMMASTAAAVARAGPAQSSMVPFNACRSSVPFPATRKANNNLSTLPGNGGRVS.

Belongs to the RuBisCO small chain family. As to quaternary structure, heterohexadecamer of 8 large and 8 small subunits.

Its subcellular location is the plastid. The protein localises to the chloroplast. RuBisCO catalyzes two reactions: the carboxylation of D-ribulose 1,5-bisphosphate, the primary event in carbon dioxide fixation, as well as the oxidative fragmentation of the pentose substrate. Both reactions occur simultaneously and in competition at the same active site. Although the small subunit is not catalytic it is essential for maximal activity. This Lemna gibba (Swollen duckweed) protein is Ribulose bisphosphate carboxylase small subunit, chloroplastic 3.